Here is a 450-residue protein sequence, read N- to C-terminus: FTFLDEGFTAKDILDQKINEVSSSDDKDAFYVADLGDIVKKHMRWHKALPRVTPFYAVKCNDSEAVVKTLAVLGAGFDCASKTEIQLVQSIGVPPERIIYANPCKQLSQIKHAANSGVRMMTFDSEVELMKIARPHPKAKLLLRITTDDSKAVCRLSVKFGATLKTSRLLLERAKELDLAIVGVSFHVGSGCTDPETFVQAISDARCVFDMGAELGFNMYLLDIGGGFPGSEDVKLKFEEITSVINPALDKYFPLDSEVTIIAEPGRYYVASAFTLAVNIIAKKIVSKEQTGSDDEDDVNDKTLMYYVNDGVYGSFNCILYDHAHVKPVLQKRPKPDDGCYSCSIWGPTCDGLDRIVERCNMPELQVGDWILFENMGAYTVAAASTFNGFQRPTIHYVMSRPAWQLMQQIKEQEFLAEVEEQDVASLPLSCACESGIEYPATCASASINV.

Lys-59 carries the post-translational modification N6-(pyridoxal phosphate)lysine. Pyridoxal 5'-phosphate-binding positions include Ser-190, Gly-227, and 264–267 (EPGR). Ser-293 is modified (phosphoserine; by CK2). Substrate is bound at residue 321 to 322 (YD). Residue Cys-350 is the Proton donor; shared with dimeric partner of the active site. Asp-351 is a substrate binding site. Tyr-379 contributes to the pyridoxal 5'-phosphate binding site.

This sequence belongs to the Orn/Lys/Arg decarboxylase class-II family. In terms of assembly, homodimer. Only the dimer is catalytically active, as the active sites are constructed of residues from both monomers. Requires pyridoxal 5'-phosphate as cofactor.

The catalysed reaction is L-ornithine + H(+) = putrescine + CO2. It participates in amine and polyamine biosynthesis; putrescine biosynthesis via L-ornithine pathway; putrescine from L-ornithine: step 1/1. With respect to regulation, inhibited by antizymes (AZs) in response to polyamine levels. AZs inhibit the assembly of the functional homodimer by binding to ODC monomers and targeting them for ubiquitin-independent proteolytic destruction by the 26S proteasome. Its function is as follows. Catalyzes the first and rate-limiting step of polyamine biosynthesis that converts ornithine into putrescine, which is the precursor for the polyamines, spermidine and spermine. Polyamines are essential for cell proliferation and are implicated in cellular processes, ranging from DNA replication to apoptosis. This Gallus gallus (Chicken) protein is Ornithine decarboxylase (ODC1).